Here is a 353-residue protein sequence, read N- to C-terminus: Guanine nucleotide-binding protein alpha-1 subunit (353 aa).

The interval 1 to 26 (MGCGMSTEEKEGKARNEEIENQLKRD) is disordered. Gly-2 carries N-myristoyl glycine lipidation. Cys-3 is lipidated: S-palmitoyl cysteine. The span at 7–26 (TEEKEGKARNEEIENQLKRD) shows a compositional bias: basic and acidic residues. In terms of domain architecture, G-alpha spans 32-353 (NEIKMLLLGA…QENLRLCGLI (322 aa)). The interval 35-48 (KMLLLGAGESGKST) is G1 motif. The GTP site is built by Glu-43, Ser-44, Gly-45, Lys-46, Ser-47, Thr-48, Asp-150, Leu-175, Thr-181, Gly-203, Asn-269, Lys-270, Asp-272, and Ala-325. Residue Ser-47 participates in Mg(2+) binding. The interval 173-181 (DVLRSRVKT) is G2 motif. Thr-181 provides a ligand contact to Mg(2+). The tract at residues 196–205 (YRMFDVGGQR) is G3 motif. A G4 motif region spans residues 265–272 (ILFLNKID). Positions 323 to 328 (TCATDT) are G5 motif.

It belongs to the G-alpha family. G(q) subfamily. In terms of assembly, g proteins are composed of 3 units; alpha, beta and gamma. The alpha chain contains the guanine nucleotide binding site. Requires Mg(2+) as cofactor.

Guanine nucleotide-binding proteins (G proteins) are involved as modulators or transducers in various transmembrane signaling systems. The polypeptide is Guanine nucleotide-binding protein alpha-1 subunit (gna-1) (Neurospora crassa (strain ATCC 24698 / 74-OR23-1A / CBS 708.71 / DSM 1257 / FGSC 987)).